Reading from the N-terminus, the 498-residue chain is Tyrosine 3-monooxygenase (498 aa).

The segment covering 1 to 10 (MPTPSASSPQ) has biased composition (polar residues). The segment at 1–33 (MPTPSASSPQPKGFRRAVSEQDTKQAEAVTSPR) is disordered. 2 positions are modified to phosphoserine: Ser19 and Ser31. Ser40 carries the phosphoserine; by CaMK2 and PKA modification. Fe cation contacts are provided by His331, His336, and Glu376. Ser472 carries the post-translational modification Phosphoserine.

It belongs to the biopterin-dependent aromatic amino acid hydroxylase family. As to quaternary structure, homotetramer. Interacts (when phosphorylated at Ser-19) with YWHAG; one YWHAG dimer bounds to one TH tetramer and this interaction may influence the phosphorylation and dephosphorylation of other sites. Interacts with NT5DC2; the interaction results in reduced phosphorylation and decreased catalytic activity of TH. Fe(2+) is required as a cofactor. Post-translationally, phosphorylated on Ser-19, Ser-31 and Ser-40 by several protein kinases with different site specificities. Phosphorylation at Ser-31 and Ser-40 leads to an increase of TH activity. Phosphorylation at Ser-40 activates the enzyme and also counteracts the feedback inhibition of TH by catecholamines. Phosphorylation of Ser-19 and Ser-31 triggers the proteasomal degradation of TH through the ubiquitin-proteasome pathway. Phosphorylation at Ser-31 facilitates transport of TH from the soma to the nerve terminals via the microtubule network. Phosphorylation at Ser-19 induces the high-affinity binding to the 14-3-3 protein YWHAG; this interaction may influence the phosphorylation and dephosphorylation of other sites. Ser-19 increases the phosphorylation at Ser-40 in a hierarchical manner, leading to increased activity. In terms of tissue distribution, expressed in the adrenal gland. Expressed in the retina. Expressed in the in the striatum (at protein level).

The protein localises to the cytoplasm. The protein resides in the perinuclear region. Its subcellular location is the nucleus. It localises to the cell projection. It is found in the axon. The protein localises to the cytoplasmic vesicle. The protein resides in the secretory vesicle. Its subcellular location is the synaptic vesicle. The enzyme catalyses (6R)-L-erythro-5,6,7,8-tetrahydrobiopterin + L-tyrosine + O2 = (4aS,6R)-4a-hydroxy-L-erythro-5,6,7,8-tetrahydrobiopterin + L-dopa. It functions in the pathway catecholamine biosynthesis; dopamine biosynthesis; dopamine from L-tyrosine: step 1/2. With respect to regulation, inhibited in feedback fashion by the catecholamine neurotransmitters, especially by dopamine in competition with tetrahydrobiopterin. Phosphorylation of several Ser/Thr residues in the N-terminus regulates the catalytic activity. Ser-31 and Ser-40 are readily phosphorylated to activate the catalytic activity. A Cysteine modification induced by N-ethylmaleimide (NEM), inhibits tyrosine 3-monooxygenase activity through the modification of the Cys-177. Its function is as follows. Catalyzes the conversion of L-tyrosine to L-dihydroxyphenylalanine (L-Dopa), the rate-limiting step in the biosynthesis of catecholamines, dopamine, noradrenaline, and adrenaline. Uses tetrahydrobiopterin and molecular oxygen to convert tyrosine to L-Dopa. In addition to tyrosine, is able to catalyze the hydroxylation of phenylalanine and tryptophan with lower specificity. Positively regulates the regression of retinal hyaloid vessels during postnatal development. This chain is Tyrosine 3-monooxygenase (Th), found in Mus musculus (Mouse).